The chain runs to 160 residues: Afimbrial adhesin AFA-III (160 aa).

An N-terminal signal peptide occupies residues 1 to 21 (MKKLAIMAAASMVFAVSSAHA). The interval 22–75 (GFTPSGTTGTTKLTVTEECQVRVGDLTVAKTRGQLTDAAPIGPVTVQALGCNAR) is receptor-binding.

This sequence belongs to the Dr-adhesin family.

The protein resides in the fimbrium. Hemagglutinins of uropathogenic E.coli mediate adherence to the upper urinary tract. These adhesins bind to the Dr blood group antigen and also agglutinate human erythrocytes in the presence of D-mannose (mannose-resistant hemagglutination (MRHA)). This Escherichia coli protein is Afimbrial adhesin AFA-III (afaE3).